The chain runs to 1074 residues: Probable arabinosyltransferase C (1074 aa).

The next 10 membrane-spanning stretches (helical) occupy residues 15–37 (ARLVAIIAGLLGTLMAIATPLLP), 214–236 (LLKLLAMIVGVAMTVIALGALHV), 251–273 (SRWWSMTPLDGLVSAMLVWWHFV), 415–437 (IIIGALTLFSGPTGIAAVGALLV), 452–474 (RFGYWALLAPIAAAGTVTIFLIF), 516–538 (SVARRFAVLTLLLALAVSIAMTL), 573–595 (THQFGVFAGLAGCLGALAAVAVT), 608–630 (FGAAVLFVTALSFATVNGWWYVS), 645–667 (FGFTTMLLGLSVLALLVAAWFHF), and 684–706 (LLVAPLAVATWALVIFEVVSLTL).

Belongs to the emb family.

The protein localises to the cell membrane. Its function is as follows. Arabinosyl transferase responsible for the polymerization of arabinose into the arabinan of arabinogalactan. In Mycolicibacterium smegmatis (Mycobacterium smegmatis), this protein is Probable arabinosyltransferase C (embC).